The following is an 829-amino-acid chain: Periplasmic nitrate reductase (829 aa).

A signal peptide (tat-type signal) is located at residues 1 to 30; that stretch reads MKLSRRDFMKANAVAAAAAVAGVSAPTLAA. A 4Fe-4S Mo/W bis-MGD-type domain is found at 41–97; that stretch reads ITWDKAPCRFCGTGCSVLVGSQDGRVVATQGDPDAPVNRGLNCIKGYFLSKIMYGQD. Residues C48, C51, C55, and C83 each coordinate [4Fe-4S] cluster. Mo-bis(molybdopterin guanine dinucleotide) contacts are provided by residues K85, Q152, N177, C181, 214–221, 245–249, 264–266, M374, Q378, N484, 510–511, K533, D560, and 719–728; these read WGSNMAEM, STFEH, QTD, SD, and TGRVLEHWHT. F795 contributes to the substrate binding site. Mo-bis(molybdopterin guanine dinucleotide)-binding residues include N803 and K820.

It belongs to the prokaryotic molybdopterin-containing oxidoreductase family. NasA/NapA/NarB subfamily. As to quaternary structure, component of the periplasmic nitrate reductase NapAB complex composed of NapA and NapB. [4Fe-4S] cluster is required as a cofactor. The cofactor is Mo-bis(molybdopterin guanine dinucleotide). Predicted to be exported by the Tat system. The position of the signal peptide cleavage has not been experimentally proven.

It localises to the periplasm. It catalyses the reaction 2 Fe(II)-[cytochrome] + nitrate + 2 H(+) = 2 Fe(III)-[cytochrome] + nitrite + H2O. Its function is as follows. Catalytic subunit of the periplasmic nitrate reductase complex NapAB. Receives electrons from NapB and catalyzes the reduction of nitrate to nitrite. The polypeptide is Periplasmic nitrate reductase (Aeromonas hydrophila subsp. hydrophila (strain ATCC 7966 / DSM 30187 / BCRC 13018 / CCUG 14551 / JCM 1027 / KCTC 2358 / NCIMB 9240 / NCTC 8049)).